Here is a 417-residue protein sequence, read N- to C-terminus: Hydrogen cyanide synthase subunit HcnC (417 aa).

The signal sequence occupies residues methionine 1–serine 18. An FAD-binding site is contributed by valine 7 to tyrosine 21. The N-palmitoyl cysteine moiety is linked to residue cysteine 19. A lipid anchor (S-diacylglycerol cysteine) is attached at cysteine 19. The chain crosses the membrane as a helical span at residues serine 46–phenylalanine 66.

Belongs to the FAD-dependent glycerol-3-phosphate dehydrogenase family. Heterotrimer of HcnA, HcnB and HcnC.

It is found in the cell membrane. It carries out the reaction glycine + 2 A = hydrogen cyanide + 2 AH2 + CO2. In terms of biological role, a three-component membrane-bound flavoenzyme that catalyzes the formation of hydrogen cyanide, a secondary metabolite, by transfer of electrons to a cyanide-resistant branch of the aerobic respiratory chain. Contributes to suppression of black root rot of tobacco. The protein is Hydrogen cyanide synthase subunit HcnC of Pseudomonas protegens (strain DSM 19095 / LMG 27888 / CFBP 6595 / CHA0).